Reading from the N-terminus, the 502-residue chain is Glycerol kinase (502 aa).

Threonine 16 contacts ADP. Residues threonine 16, threonine 17, and serine 18 each contribute to the ATP site. A sn-glycerol 3-phosphate-binding site is contributed by threonine 16. Residue arginine 20 coordinates ADP. Sn-glycerol 3-phosphate is bound by residues arginine 86, glutamate 87, tyrosine 138, and aspartate 247. Arginine 86, glutamate 87, tyrosine 138, aspartate 247, and glutamine 248 together coordinate glycerol. ADP-binding residues include threonine 269 and glycine 312. ATP-binding residues include threonine 269, glycine 312, glutamine 316, and glycine 413. ADP contacts are provided by glycine 413 and asparagine 417.

This sequence belongs to the FGGY kinase family.

The enzyme catalyses glycerol + ATP = sn-glycerol 3-phosphate + ADP + H(+). Its pathway is polyol metabolism; glycerol degradation via glycerol kinase pathway; sn-glycerol 3-phosphate from glycerol: step 1/1. Inhibited by fructose 1,6-bisphosphate (FBP). In terms of biological role, key enzyme in the regulation of glycerol uptake and metabolism. Catalyzes the phosphorylation of glycerol to yield sn-glycerol 3-phosphate. The sequence is that of Glycerol kinase from Dechloromonas aromatica (strain RCB).